The chain runs to 443 residues: Phosphoglucosamine mutase (443 aa).

Ser-101 serves as the catalytic Phosphoserine intermediate. Mg(2+) contacts are provided by Ser-101, Asp-239, Asp-241, and Asp-243. Position 101 is a phosphoserine (Ser-101).

Belongs to the phosphohexose mutase family. Requires Mg(2+) as cofactor. Activated by phosphorylation.

It catalyses the reaction alpha-D-glucosamine 1-phosphate = D-glucosamine 6-phosphate. Functionally, catalyzes the conversion of glucosamine-6-phosphate to glucosamine-1-phosphate. The chain is Phosphoglucosamine mutase from Francisella tularensis subsp. tularensis (strain WY96-3418).